Consider the following 1960-residue polypeptide: MAQQAADKYLYVDKNFINNPLAQADWAAKKLVWVPSSKNGFEPASLKEEVGEEAIVELVENGKKVKVNKDDIQKMNPPKFSKVEDMAELTCLNEASVLHNLKERYYSGLIYTYSGLFCVVINPYKNLPIYSEEIVEMYKGKKRHEMPPHIYAITDTAYRSMMQDREDQSILCTGESGAGKTENTKKVIQYLAHVASSHKSKKDQGELERQLLQANPILEAFGNAKTVKNDNSSRFGKFIRINFDVNGYIVGANIETYLLEKSRAIRQAKEERTFHIFYYLLSGAGEHLKTDLLLEPYNKYRFLSNGHVTIPGQQDKDMFQETMEAMRIMGIPEDEQMGLLRVISGVLQLGNIAFKKERNTDQASMPDNTAAQKVSHLLGINVTDFTRGILTPRIKVGRDYVQKAQTKEQADFAIEALAKATYERMFRWLVLRINKALDKTKRQGASFIGILDIAGFEIFDLNSFEQLCINYTNEKLQQLFNHTMFILEQEEYQREGIEWNFIDFGLDLQPCIDLIEKPAGPPGILALLDEECWFPKATDKSFVEKVVQEQGTHPKFQKPKQLKDKADFCIIHYAGKVDYKADEWLMKNMDPLNDNIATLLHQSSDKFVSELWKDVDRIIGLDQVAGMSETALPGAFKTRKGMFRTVGQLYKEQLAKLMATLRNTNPNFVRCIIPNHEKKAGKLDPHLVLDQLRCNGVLEGIRICRQGFPNRVVFQEFRQRYEILTPNSIPKGFMDGKQACVLMIKALELDSNLYRIGQSKVFFRAGVLAHLEEERDLKITDVIIGFQACCRGYLARKAFAKRQQQLTAMKVLQRNCAAYLRLRNWQWWRLFTKVKPLLNSIRHEDELLAKEAELTKVREKHLAAENRLTEMETMQSQLMAEKLQLQEQLQAETELCAEAEELRARLTAKKQELEEICHDLEARVEEEEERCQYLQAEKKKMQQNIQELEEQLEEEESARQKLQLEKVTTEAKLKKLEEDQIIMEDQNCKLAKEKKLLEDRVAEFTTNLMEEEEKSKSLAKLKNKHEAMITDLEERLRREEKQRQELEKTRRKLEGDSTDLSDQIAELQAQIAELKMQLAKKEEELQAALARVEEEAAQKNMALKKIRELETQISELQEDLESERASRNKAEKQKRDLGEELEALKTELEDTLDSTAAQQELRSKREQEVSILKKTLEDEAKTHEAQIQEMRQKHSQAVEELADQLEQTKRVKATLEKAKQTLENERGELANEVKALLQGKGDSEHKRKKVEAQLQELQVKFSEGERVRTELADKVTKLQVELDSVTGLLSQSDSKSSKLTKDFSALESQLQDTQELLQEENRQKLSLSTKLKQMEDEKNSFREQLEEEEEAKRNLEKQIATLHAQVTDMKKKMEDGVGCLETAEEAKRRLQKDLEGLSQRLEEKVAAYDKLEKTKTRLQQELDDLLVDLDHQRQSVSNLEKKQKKFDQLLAEEKTISAKYAEERDRAEAEAREKETKALSLARALEEAMEQKAELERLNKQFRTEMEDLMSSKDDVGKSVHELEKSKRALEQQVEEMKTQLEELEDELQATEDAKLRLEVNLQAMKAQFERDLQGRDEQSEEKKKQLVRQVREMEAELEDERKQRSMAMAARKKLEMDLKDLEAHIDTANKNREEAIKQLRKLQAQMKDCMRELDDTRASREEILAQAKENEKKLKSMEAEMIQLQEELAAAERAKRQAQQERDELADEIANSSGKGALALEEKRRLEARIAQLEEELEEEQGNTELINDRLKKANLQIDQINTDLNLERSHAQKNENARQQLERQNKELKAKLQEMESAVKSKYKASIAALEAKIAQLEEQLDNETKERQAASKQVRRTEKKLKDVLLQVEDERRNAEQFKDQADKASTRLKQLKRQLEEAEEEAQRANASRRKLQRELEDATETADAMNREVSSLKNKLRRGDLPFVVTRRIVRKGTGDCSDEEVDGKADGADAKAAE.

An N-acetylalanine modification is found at alanine 2. A mediates interaction with LIMCH1 region spans residues alanine 2–leucine 838. At lysine 8 the chain carries N6-acetyllysine. At tyrosine 11 the chain carries Phosphotyrosine. In terms of domain architecture, Myosin N-terminal SH3-like spans alanine 27–proline 77. One can recognise a Myosin motor domain in the interval serine 81 to aspartate 776. Residue lysine 102 is modified to N6-acetyllysine. Glycine 174–threonine 181 contributes to the ATP binding site. N6-acetyllysine occurs at positions 299, 435, and 613. At serine 628 the chain carries Phosphoserine. Residues leucine 654–histidine 676 form an actin-binding region. Tyrosine 754 carries the phosphotyrosine modification. Positions isoleucine 779–alanine 808 constitute an IQ domain. Residues isoleucine 841–leucine 1926 adopt a coiled-coil conformation. Lysine 850 carries the post-translational modification N6-succinyllysine. N6-acetyllysine occurs at positions 860, 975, and 1024. Basic and acidic residues predominate over residues arginine 1035–glycine 1055. A disordered region spans residues arginine 1035–serine 1057. The residue at position 1114 (serine 1114) is a Phosphoserine. Positions glutamine 1117–glutamine 1167 are disordered. Basic and acidic residues predominate over residues serine 1122 to leucine 1148. An N6-acetyllysine mark is found at lysine 1234 and lysine 1249. A disordered region spans residues leucine 1327–lysine 1352. The span at lysine 1332 to lysine 1352 shows a compositional bias: basic and acidic residues. Lysine 1357, lysine 1392, lysine 1404, lysine 1410, lysine 1459, and lysine 1638 each carry N6-acetyllysine. Lysine 1669 carries the N6-succinyllysine modification. Position 1714 is a phosphoserine (serine 1714). Positions leucine 1768 to lysine 1788 are disordered. Residues lysine 1793, lysine 1802, and lysine 1845 each carry the N6-acetyllysine modification. The tract at residues arginine 1877–aspartate 1908 is disordered. Arginine 1923 bears the Omega-N-methylarginine mark. Position 1939 is a phosphothreonine (threonine 1939). Residues threonine 1939 to glutamate 1960 form a disordered region. Position 1943 is a phosphoserine (serine 1943). Positions aspartate 1948–glutamate 1960 are enriched in basic and acidic residues.

Belongs to the TRAFAC class myosin-kinesin ATPase superfamily. Myosin family. Myosin is a hexameric protein that consists of 2 heavy chain subunits (MHC), 2 alkali light chain subunits (MLC) and 2 regulatory light chain subunits (MLC-2). Interacts with RASIP1. Interacts with DDR1. Interacts with PDLIM2. Interacts with SVIL. Interacts with HTRA3. Interacts with Myo7a. Interacts with CFAP95. Interacts with LIMCH1; independently of the integration of MYH9 into the myosin complex. Interacts with RAB3A. Interacts with ZBED4. Interacts with S100A4; this interaction increases cell motility. ISGylated. In terms of processing, ubiquitination.

It is found in the cytoplasm. The protein localises to the cytoskeleton. The protein resides in the cell cortex. Its subcellular location is the cytoplasmic vesicle. It localises to the secretory vesicle. It is found in the cortical granule. Its function is as follows. Cellular myosin that appears to play a role in cytokinesis, cell shape, and specialized functions such as secretion and capping. Required for cortical actin clearance prior to oocyte exocytosis. Promotes cell motility in conjunction with S100A4. During cell spreading, plays an important role in cytoskeleton reorganization, focal contact formation (in the margins but not the central part of spreading cells), and lamellipodial retraction; this function is mechanically antagonized by MYH10. The protein is Myosin-9 (Myh9) of Mus musculus (Mouse).